The primary structure comprises 1221 residues: MLYKFETKASRVKGLSFHPTRPWILASLHSGSIHLYDYRIKTLLEKFDEHEGPVRGINFHMTQPLFVSGGDDYKIKVWNYKQRRCLFTLKGHKDYIRSVEFHREAPWIVSSSDDMVIRIWNWQSRTCIAELNGHNHYVMSALFHPKDDLVVSASLDQTIRIWDISGLKKKMTTVKPYRENDPMRLQDELFGTDISVRLSLEGHDRGVNWASFHPTQPYIVSASDDHQVKLWRMNDPIVDTFRGHYNNVSCALFHPRQDLIISNSEDKTIRVWDIIKKSTVHMIRRDHDRFWTLASHPNQNLFAAGHDSGMIVFKLERERPLFVQNGDSGVFFLKKKNFNSFDFQAGRTVSLFHISKLPSNNGTQTMSYNQTERAILVSSDAEGGSYHLYKIPPKDSNTVNTKKGTGVAAIFVGRDRFAVLDKGNNVVIRDLENEEIKRCQIPFTIDWIYPSGSPGTILIQSEDKIHMFDIQQKKMLCEIQVHGVRYVIWSKDRNYVAFLTRDFIVLANKKLEQICMIHETVLPKSGVWDDNGVFIYSTSNHLKYLLQNGDNGTIRTLESTIYITGVKNNKVFAIDREFKNRIIEIDTTEYVLKLSLLQQNYNQVMTILRENRLVGKAIIAYLQKKGYPDVVHFVKDDRTRFNLALDAGNIDIALSSAKILDDKDCWNRLGVEALKQGNYQVVEMAYSRTSEFDRLSFLYLLVGNLSTLKKMISYESSDIMSRFHFSLYLGDVEERIKILQEAGLHQLAYITASIHGLTEKAESIGNLITSDGKSQLPQLPKQSYLLVPPSPINCNPNELNWPLLTTTKSVSDVMGENRFGVEQSTSTPTGDWESDEDIFSEGKSQQQSSQQQQQQQQKGDWEEDILIGDGNNGGGDDGGWERDDLKGLEKIGTDGFNNKQNDHVALFVPPQPGPSFSMIWARNSQFAVDHIAAGSFESAMNILNSQIGAVNFDPIKSMFMNIFMATRSSLGCNASTPSLLMPIQRKSAAPYITYGLGHLIERLKTNAYKSTTEGKFNDALSHFTYILHTIIFCSVDNKQEVNELKDLINICREYILGIKIELQRKELSIGAQKDSTLGRQAELAAYFTHCNLDPSHLILSLRSAMNCAYKVKHFNLAASFARRLISLNPNPDLATQAKKVFNFAQQTPTPSDIQQLNYDERNPFVICAHSYVPIYKGSPLIKCPYCSSCYLPTHKGKVCSVCQISEIGKDVQGLQVITIQK.

9 WD repeats span residues 7 to 46 (TKASRVKGLSFHPTRPWILASLHSGSIHLYDYRIKTLLEK), 49 to 88 (EHEGPVRGINFHMTQPLFVSGGDDYKIKVWNYKQRRCLFT), 91 to 130 (GHKDYIRSVEFHREAPWIVSSSDDMVIRIWNWQSRTCIAE), 133 to 172 (GHNHYVMSALFHPKDDLVVSASLDQTIRIWDISGLKKKMT), 202 to 241 (GHDRGVNWASFHPTQPYIVSASDDHQVKLWRMNDPIVDTF), 243 to 282 (GHYNNVSCALFHPRQDLIISNSEDKTIRVWDIIKKSTVHM), 285 to 323 (RDHDRFWTLASHPNQNLFAAGHDSGMIVFKLERERPLFV), 358 to 399 (PSNN…SNTV), and 528 to 567 (WDDNGVFIYSTSNHLKYLLQNGDNGTIRTLESTIYITGVK). The interval 820 to 885 (GVEQSTSTPT…DDGGWERDDL (66 aa)) is disordered. Low complexity predominate over residues 844–857 (SQQQSSQQQQQQQQ). The WD 10 repeat unit spans residues 910 to 953 (PQPGPSFSMIWARNSQFAVDHIAAGSFESAMNILNSQIGAVNFD).

In terms of assembly, oligomeric complex that consists of at least the alpha, beta, beta', gamma, delta, epsilon and zeta subunits.

The protein resides in the cytoplasm. It is found in the golgi apparatus membrane. Its function is as follows. The coatomer is a cytosolic protein complex that binds to dilysine motifs and reversibly associates with Golgi non-clathrin-coated vesicles, which further mediate biosynthetic protein transport from the ER, via the Golgi up to the trans Golgi network. Coatomer complex is required for budding from Golgi membranes, and is essential for the retrograde Golgi-to-ER transport of dilysine-tagged proteins. The chain is Coatomer subunit alpha (copa) from Dictyostelium discoideum (Social amoeba).